The primary structure comprises 321 residues: tRNA(Ile)-lysidine synthase (321 aa).

30–35 (SGGSDS) is an ATP binding site.

It belongs to the tRNA(Ile)-lysidine synthase family.

It is found in the cytoplasm. The catalysed reaction is cytidine(34) in tRNA(Ile2) + L-lysine + ATP = lysidine(34) in tRNA(Ile2) + AMP + diphosphate + H(+). Its function is as follows. Ligates lysine onto the cytidine present at position 34 of the AUA codon-specific tRNA(Ile) that contains the anticodon CAU, in an ATP-dependent manner. Cytidine is converted to lysidine, thus changing the amino acid specificity of the tRNA from methionine to isoleucine. The sequence is that of tRNA(Ile)-lysidine synthase from Chlamydia muridarum (strain MoPn / Nigg).